Reading from the N-terminus, the 210-residue chain is Imidazoleglycerol-phosphate dehydratase (210 aa).

The protein belongs to the imidazoleglycerol-phosphate dehydratase family.

The protein resides in the cytoplasm. The enzyme catalyses D-erythro-1-(imidazol-4-yl)glycerol 3-phosphate = 3-(imidazol-4-yl)-2-oxopropyl phosphate + H2O. The protein operates within amino-acid biosynthesis; L-histidine biosynthesis; L-histidine from 5-phospho-alpha-D-ribose 1-diphosphate: step 6/9. This Mycobacterium marinum (strain ATCC BAA-535 / M) protein is Imidazoleglycerol-phosphate dehydratase.